The following is a 7260-amino-acid chain: Nonribosomal peptide synthetase ecdA (7260 aa).

Positions 4–80 (TNEMERKRVF…ELFETIQYLQ (77 aa)) constitute a Carrier 1 domain. Serine 41 carries the O-(pantetheine 4'-phosphoryl)serine modification. The tract at residues 134 to 549 (EDVYPSTPLQ…SINEILTLPA (416 aa)) is condensation 1. The interval 575–965 (QDQVRSQPAA…DGSLLYVGRC (391 aa)) is adenylation 1. Residues 1090 to 1166 (APSTAIEHKL…DLARELEGRN (77 aa)) form the Carrier 2 domain. O-(pantetheine 4'-phosphoryl)serine is present on serine 1127. The segment at 1208–1628 (EDIIPCTAMQ…LGDLSLLSAD (421 aa)) is condensation 2. The segment at 1653–2054 (EEQITARPDS…GRRDTQIKIR (402 aa)) is adenylation 2. In terms of domain architecture, Carrier 3 spans 2188–2264 (TPSTPTESQL…DLANLLSSRF (77 aa)). Serine 2225 carries the O-(pantetheine 4'-phosphoryl)serine modification. The segment at 2314–2719 (QDVYPCTPLQ…THVVQQLCDP (406 aa)) is condensation 3. The segment at 2763-3156 (KQALAQPNAP…GRRDTQVKIR (394 aa)) is adenylation 3. One can recognise a Carrier 4 domain in the interval 3287–3365 (QPATEMEKML…ELAQVLEERV (79 aa)). Serine 3324 is modified (O-(pantetheine 4'-phosphoryl)serine). The tract at residues 3417–3831 (VQDVYPCTPL…LLSPNDQQQI (415 aa)) is condensation 4. The tract at residues 3851–4248 (EEQAMAHPTK…SFVYVARRNT (398 aa)) is adenylation 4. The 78-residue stretch at 4394–4471 (APATAMERTL…DLANLLADGA (78 aa)) folds into the Carrier 5 domain. The residue at position 4431 (serine 4431) is an O-(pantetheine 4'-phosphoryl)serine. Residues 4510–4910 (EDIYPATPLQ…HFVHVAEQLF (401 aa)) form a condensation 5 region. Residues 4955–5357 (ERAALQPNAP…GRRDLQVKIR (403 aa)) form an adenylation 5 region. Residues 5496-5573 (APRTVMEQQV…DLALVLSERG (78 aa)) form the Carrier 6 domain. An O-(pantetheine 4'-phosphoryl)serine modification is found at serine 5533. Residues 5622 to 6043 (EDVYPCTPLQ…AVSEKDERQI (422 aa)) form a condensation 6 region. Residues 6063–6460 (QEQVARTPGE…GRHDSQVKIR (398 aa)) are adenylation 6. A Carrier 7 domain is found at 6592-6668 (APSTAMERQL…EVAQVVEDRV (77 aa)). Position 6629 is an O-(pantetheine 4'-phosphoryl)serine (serine 6629). A condensation 7 region spans residues 6718–7133 (LPTTDFQALT…ILDSPGLLVS (416 aa)). A disordered region spans residues 7241–7260 (CEEAEKSASVTSSERRLATI).

Belongs to the NRP synthetase family.

Its pathway is antifungal biosynthesis. Functionally, nonribosomal peptide synthetase; part of the gene cluster that mediates the biosynthesis of echinocandin B, a fungal lipidated cyclic hexapeptide that acts as an antifungal agent. Linoleoyl-AMP, produced by the fatty-acyl-AMP ligase ecdI, is transferred to the initiation carrier domain (T0) of ecdA. The linoleoyl-S-phosphopantetheinyl-T0 is sequentially extended with L-ornithine, L-threonine, L-proline, L-homotyrosine, L-threonine, and 4R-methyl-L-proline to form the linear hexapeptide. Thereafter, the terminal condensation (C7) performs macrocyclization of the NRPS product and the cyclic scaffold is released from ecdA. All six of the amino acid residues are hydroxylated, including 4R,5R-dihydroxy-L-ornithine, 4R-hydroxyl-L-proline, 3S,4S-dihydroxy-L-homotyrosine, and 3S-hydroxyl-4S-methyl-L-prolin. In the pathway, all the hydroxylation reactions are proposed to occur following completion of the cyclic peptide, so the unhydroxylated precursor produced by ecdA will undergo six rounds of hydroxylation. Five hydroxylase genes (ecdG, ecdH, ecdK, htyE and htyF) are embedded within the echinocandin B (ecd) and L-homotyrosine (hty) clusters. The protein is Nonribosomal peptide synthetase ecdA of Aspergillus rugulosus (Emericella rugulosa).